A 192-amino-acid chain; its full sequence is Elongation factor P (192 aa).

The protein belongs to the elongation factor P family.

The protein localises to the cytoplasm. Its pathway is protein biosynthesis; polypeptide chain elongation. Involved in peptide bond synthesis. Stimulates efficient translation and peptide-bond synthesis on native or reconstituted 70S ribosomes in vitro. Probably functions indirectly by altering the affinity of the ribosome for aminoacyl-tRNA, thus increasing their reactivity as acceptors for peptidyl transferase. The protein is Elongation factor P of Borrelia hermsii (strain HS1 / DAH).